Consider the following 99-residue polypeptide: NADH-quinone oxidoreductase subunit K (99 aa).

A run of 3 helical transmembrane segments spans residues 3–23 (PENY…GVLI), 28–48 (IIVF…FVTF), and 59–79 (VFAF…LAII).

This sequence belongs to the complex I subunit 4L family. NDH-1 is composed of 14 different subunits. Subunits NuoA, H, J, K, L, M, N constitute the membrane sector of the complex.

The protein resides in the cell membrane. It catalyses the reaction a quinone + NADH + 5 H(+)(in) = a quinol + NAD(+) + 4 H(+)(out). Its function is as follows. NDH-1 shuttles electrons from NADH, via FMN and iron-sulfur (Fe-S) centers, to quinones in the respiratory chain. The immediate electron acceptor for the enzyme in this species is believed to be a menaquinone. Couples the redox reaction to proton translocation (for every two electrons transferred, four hydrogen ions are translocated across the cytoplasmic membrane), and thus conserves the redox energy in a proton gradient. The sequence is that of NADH-quinone oxidoreductase subunit K from Rhodococcus jostii (strain RHA1).